Reading from the N-terminus, the 424-residue chain is Gamma-glutamyl phosphate reductase (424 aa).

Belongs to the gamma-glutamyl phosphate reductase family.

It localises to the cytoplasm. The enzyme catalyses L-glutamate 5-semialdehyde + phosphate + NADP(+) = L-glutamyl 5-phosphate + NADPH + H(+). It functions in the pathway amino-acid biosynthesis; L-proline biosynthesis; L-glutamate 5-semialdehyde from L-glutamate: step 2/2. Functionally, catalyzes the NADPH-dependent reduction of L-glutamate 5-phosphate into L-glutamate 5-semialdehyde and phosphate. The product spontaneously undergoes cyclization to form 1-pyrroline-5-carboxylate. The polypeptide is Gamma-glutamyl phosphate reductase (Shewanella sediminis (strain HAW-EB3)).